Consider the following 412-residue polypeptide: Mannose-1-phosphate guanylyltransferase regulatory subunit alpha (412 aa).

The tract at residues 6-259 (TKAIILVGGP…VGFWRQIKNA (254 aa)) is substrate-binding domain. Residues Glu-88 and Gln-255 each contribute to the GDP-alpha-D-mannose site. A hexapeptide repeat domain region spans residues 281-412 (LKKGNNIIGN…DRNYNNEIIL (132 aa)).

Belongs to the transferase hexapeptide repeat family. As to quaternary structure, component of the GMPPA-GMPPB mannose-1-phosphate guanylyltransferase complex composed of 4 gmppA subunits and 8 gmppB subunits; the complex is organized into three layers, a central layer made up of 2 gmppA dimers sandwiched between two layers each made up of 2 gmppB dimers.

Functionally, regulatory subunit of the GMPPA-GMPPB mannose-1-phosphate guanylyltransferase complex; reduces the catalytic activity of GMPPB when part of the complex. Mediates allosteric feedback inhibition of GMPPB catalytic activity upon binding GDP-alpha-D-mannose. Together with GMPPB regulates GDP-alpha-D-mannose levels. This is Mannose-1-phosphate guanylyltransferase regulatory subunit alpha (gmppA) from Dictyostelium discoideum (Social amoeba).